A 1135-amino-acid polypeptide reads, in one-letter code: DNA-directed RNA polymerase I subunit RPA2 (1135 aa).

Residues 1 to 24 (MDPGSRWRNLPSGPSLKHLTDPSY) are disordered. Position 180 (R180) interacts with RNA. The interval 194-208 (IRPKWKTRGPGYTQY) is loop B. Residues 236–247 (LNFIYRKELFFL) form a loop A region. Residue D367 participates in RNA binding. Fork loop regions lie at residues 439–453 (LRSK…DSGL) and 474–489 (RGAD…VRRL). D755 serves as a coordination point for Mg(2+). K890 contacts RNA. DNA-binding residues include R1020 and R1036. S1051 carries the phosphoserine modification. 4 residues coordinate Zn(2+): C1070, C1073, C1098, and C1101. The segment at 1070–1101 (CVKCGSLLSPLLEKPPPSWSAMRNRKYNCTLC) adopts a C4-type zinc-finger fold.

It belongs to the RNA polymerase beta chain family. As to quaternary structure, component of the RNA polymerase I (Pol I) complex consisting of 13 subunits: a ten-subunit catalytic core composed of POLR1A/RPA1, POLR1B/RPA2, POLR1C/RPAC1, POLR1D/RPAC2, POLR1H/RPA12, POLR2E/RPABC1, POLR2F/RPABC2, POLR2H/RPABC3, POLR2K/RPABC4 and POLR2L/RPABC5; a mobile stalk subunit POLR1F/RPA43 protruding from the core and additional subunits homologous to general transcription factors POLR1E/RPA49 and POLR1G/RPA34. Part of Pol I pre-initiation complex (PIC), in which Pol I core assembles with RRN3 and promoter-bound UTBF and SL1/TIF-IB complex. Requires Mg(2+) as cofactor.

It localises to the nucleus. It is found in the nucleolus. Its subcellular location is the chromosome. It carries out the reaction RNA(n) + a ribonucleoside 5'-triphosphate = RNA(n+1) + diphosphate. In terms of biological role, catalytic core component of RNA polymerase I (Pol I), a DNA-dependent RNA polymerase which synthesizes ribosomal RNA precursors using the four ribonucleoside triphosphates as substrates. Transcribes 47S pre-rRNAs from multicopy rRNA gene clusters, giving rise to 5.8S, 18S and 28S ribosomal RNAs. Pol I-mediated transcription cycle proceeds through transcription initiation, transcription elongation and transcription termination stages. During transcription initiation, Pol I pre-initiation complex (PIC) is recruited by the selectivity factor 1 (SL1/TIF-IB) complex bound to the core promoter that precedes an rDNA repeat unit. The PIC assembly bends the promoter favoring the formation of the transcription bubble and promoter escape. Once the polymerase has escaped from the promoter it enters the elongation phase during which RNA is actively polymerized, based on complementarity with the template DNA strand. Highly processive, assembles in structures referred to as 'Miller trees' where many elongating Pol I complexes queue and transcribe the same rDNA coding regions. At terminator sequences downstream of the rDNA gene, PTRF interacts with Pol I and halts Pol I transcription leading to the release of the RNA transcript and polymerase from the DNA. Forms Pol I active center together with the largest subunit POLR1A/RPA1. Appends one nucleotide at a time to the 3' end of the nascent RNA, with POLR1A/RPA1 contributing a Mg(2+)-coordinating DxDGD motif, and POLR1B/RPA2 participating in the coordination of a second Mg(2+) ion and providing lysine residues believed to facilitate Watson-Crick base pairing between the incoming nucleotide and the template base. Typically, Mg(2+) ions direct a 5' nucleoside triphosphate to form a phosphodiester bond with the 3' hydroxyl of the preceding nucleotide of the nascent RNA, with the elimination of pyrophosphate. Has proofreading activity: Pauses and backtracks to allow the cleavage of a missincorporated nucleotide via POLR1H/RPA12. High Pol I processivity is associated with decreased transcription fidelity. In Homo sapiens (Human), this protein is DNA-directed RNA polymerase I subunit RPA2.